A 230-amino-acid polypeptide reads, in one-letter code: MKIGIVGAMAQEVEILAGLMTDKTEHKIGSAVVFEGEVNGKSVVLLQSGIGKVAAAIGTTVLLQGFKPDVVINTGSAGGVAQGLKVGDIVISTETAYHDADVTAFGYAKGQLPACPATFKSDEKLTALAEKIAQKQGRRVKQGLICSGDSFIAGGERLAQIKADFPPVTAVEMEAAAIAHVCHAFGVPFVVVRAISDAGDGEAGMSFEEFLPIAAKQSCEMVLGMLAELE.

Residue Glu12 is the Proton acceptor of the active site. Residues Gly78, Ile152, and 173-174 (ME) contribute to the substrate site. The active-site Proton donor is the Asp197.

This sequence belongs to the PNP/UDP phosphorylase family. MtnN subfamily.

It catalyses the reaction S-adenosyl-L-homocysteine + H2O = S-(5-deoxy-D-ribos-5-yl)-L-homocysteine + adenine. The catalysed reaction is S-methyl-5'-thioadenosine + H2O = 5-(methylsulfanyl)-D-ribose + adenine. The enzyme catalyses 5'-deoxyadenosine + H2O = 5-deoxy-D-ribose + adenine. It functions in the pathway amino-acid biosynthesis; L-methionine biosynthesis via salvage pathway; S-methyl-5-thio-alpha-D-ribose 1-phosphate from S-methyl-5'-thioadenosine (hydrolase route): step 1/2. Its function is as follows. Catalyzes the irreversible cleavage of the glycosidic bond in both 5'-methylthioadenosine (MTA) and S-adenosylhomocysteine (SAH/AdoHcy) to adenine and the corresponding thioribose, 5'-methylthioribose and S-ribosylhomocysteine, respectively. Also cleaves 5'-deoxyadenosine, a toxic by-product of radical S-adenosylmethionine (SAM) enzymes, into 5-deoxyribose and adenine. The chain is 5'-methylthioadenosine/S-adenosylhomocysteine nucleosidase from Actinobacillus succinogenes (strain ATCC 55618 / DSM 22257 / CCUG 43843 / 130Z).